The primary structure comprises 397 residues: Lymphoid enhancer-binding factor 1 (397 aa).

A CTNNB1-binding region spans residues 1-60 (MPQLSGGGGGGDPELCATDEMIPFKDEGDPQKEKIFAEISHPEEEGDLADIKSSLVNESE). Lysine 25 is covalently cross-linked (Glycyl lysine isopeptide (Lys-Gly) (interchain with G-Cter in SUMO)). A disordered region spans residues 59–102 (SEIIPASNGHEVVRQAPSSQEPYHDKAREHPDEGKHPDGGLYNK). Positions 80–96 (PYHDKAREHPDEGKHPD) are enriched in basic and acidic residues. Position 130 is a phosphoserine (serine 130). A Phosphothreonine; by NLK modification is found at threonine 153. Residue serine 164 is modified to Phosphoserine; by NLK. Disordered stretches follow at residues 164–191 (SPGS…APEI) and 266–296 (VKQE…KRPH). A Glycyl lysine isopeptide (Lys-Gly) (interchain with G-Cter in SUMO) cross-link involves residue lysine 267. Over residues 267–294 (KQEHPHTDSDLMHVKPQHEQRKEQEPKR) the composition is skewed to basic and acidic residues. Positions 297 to 365 (IKKPLNAFML…LHMQLYPGWS (69 aa)) form a DNA-binding region, HMG box. Residues 367-397 (RDNYGKKKKRKREKLQESTSGTGPRMTAAYI) form a disordered region.

This sequence belongs to the TCF/LEF family. In terms of assembly, binds the armadillo repeat of CTNNB1 and forms a stable complex. Binds TLE1, ALYREF/THOC4, MDFI and MDFIC. Interacts with NLK. Interacts with EP300 and PIASG. Interacts with DAZAP2. Post-translationally, phosphorylated at Thr-153 and/or Ser-164 by NLK. Phosphorylation by NLK at these sites represses LEF1-mediated transcriptional activation of target genes of the canonical Wnt signaling pathway. In terms of tissue distribution, expressed in Vgamma1.1 and Vgamma2 gamma-delta T-cells, however not expressed in gamma-delta thymocytes fated for Il17a expression (at protein level). Expressed in alpha-beta T-cell lineages. Expressed in the thymus. Found in distinct epithelial cell compartments of the skin and is abundant in the hair-producing progenitors of the follicle.

The protein resides in the nucleus. Transcription factor that binds DNA in a sequence-specific manner. Participates in the Wnt signaling pathway. Activates transcription of target genes in the presence of CTNNB1 and EP300. PIASG antagonizes both Wnt-dependent and Wnt-independent activation by LEF1. TLE1, TLE2, TLE3 and TLE4 repress transactivation mediated by LEF1 and CTNNB1. Regulates T-cell receptor alpha enhancer function. Required for IL17A expressing gamma-delta T-cell maturation and development, via binding to regulator loci of BLK to modulate expression. Acts as a positive regulator of odontoblast differentiation during mesenchymal tooth germ formation, expression is repressed during the bell stage by MSX1-mediated inhibition of CTNNB1 signaling. May play a role in hair cell differentiation and follicle morphogenesis. In Mus musculus (Mouse), this protein is Lymphoid enhancer-binding factor 1.